The sequence spans 313 residues: MLLRRLPAVHFAKGSRQFGSLQAIADSFVQLHDASGVPWLVLIPTATFALRTVFTLPLSIWQRKRIVKQQELRKVVQSVPPVVKLRLASMTAKANDEELTSSGSAIQTKEETVGALQRGKRQLTPDQITMLSLKEMRKRQKVLFKKYNVQMWKNSVLPLVQVPLWVTMSMGLRKLTDSRLVDTNMPHAHVLQDLSETSWLTHIGSLDLSLPLDAAPMLIPIILGTVSMINVEYNGKTMQATAVGTSGITTATDTQSRTSQTVNSILTATRLSTIFLIGVSTQASVLLSLYWITSQVYSLIQNRILDLLWPYQR.

Residues 209 to 229 form a helical membrane-spanning segment; the sequence is SLPLDAAPMLIPIILGTVSMI. At 230–272 the chain is on the mitochondrial matrix side; that stretch reads NVEYNGKTMQATAVGTSGITTATDTQSRTSQTVNSILTATRLS. The chain crosses the membrane as a helical span at residues 273-293; the sequence is TIFLIGVSTQASVLLSLYWIT. At 294-313 the chain is on the mitochondrial intermembrane side; it reads SQVYSLIQNRILDLLWPYQR.

It belongs to the OXA1/ALB3/YidC family.

It is found in the mitochondrion inner membrane. In terms of biological role, required for the insertion of integral membrane proteins into the mitochondrial inner membrane. Essential for the activity and assembly of cytochrome c oxidase. The polypeptide is Cytochrome c oxidase assembly protein COX18, mitochondrial (COX18) (Kluyveromyces lactis (strain ATCC 8585 / CBS 2359 / DSM 70799 / NBRC 1267 / NRRL Y-1140 / WM37) (Yeast)).